Here is a 515-residue protein sequence, read N- to C-terminus: Maturase K (515 aa).

Belongs to the intron maturase 2 family. MatK subfamily.

The protein resides in the plastid. It is found in the chloroplast. Usually encoded in the trnK tRNA gene intron. Probably assists in splicing its own and other chloroplast group II introns. This Zingiber officinale (Ginger) protein is Maturase K.